A 429-amino-acid polypeptide reads, in one-letter code: Probable imidazolonepropionase (429 aa).

4-imidazolone-5-propanoate is bound by residues Y161 and H194. Y161 serves as a coordination point for N-formimidoyl-L-glutamate. Fe(3+) is bound at residue H262. H262 lines the Zn(2+) pocket. E265 contributes to the 4-imidazolone-5-propanoate binding site. Residue D336 participates in Fe(3+) binding. Residue D336 participates in Zn(2+) binding. An N-formimidoyl-L-glutamate-binding site is contributed by N338.

The protein belongs to the metallo-dependent hydrolases superfamily. HutI family. The cofactor is Zn(2+). Requires Fe(3+) as cofactor.

The enzyme catalyses 4-imidazolone-5-propanoate + H2O = N-formimidoyl-L-glutamate. It functions in the pathway amino-acid degradation; L-histidine degradation into L-glutamate; N-formimidoyl-L-glutamate from L-histidine: step 3/3. This Nematostella vectensis (Starlet sea anemone) protein is Probable imidazolonepropionase (amdhd1).